A 132-amino-acid polypeptide reads, in one-letter code: Small ribosomal subunit protein uS9 (132 aa).

The protein belongs to the universal ribosomal protein uS9 family.

The sequence is that of Small ribosomal subunit protein uS9 from Leptospira borgpetersenii serovar Hardjo-bovis (strain JB197).